The sequence spans 461 residues: Phosphatidate cytidylyltransferase 1 (461 aa).

Residues 1–67 are disordered; the sequence is MLELRHRGSC…IPEIPPSSDR (67 aa). Arg7 bears the Omega-N-methylarginine mark. Residues 20-56 show a composition bias toward basic and acidic residues; sequence PHREGEAAGGDHETESTSDKETDIDDRYGDLDSRTDS. 2 positions are modified to phosphoserine: Ser35 and Ser37. Helical transmembrane passes span 96–116, 149–169, 183–203, 230–250, 279–299, and 357–377; these read MISL…LLVL, FLLC…FATF, HRFI…LSLV, LVIQ…SSVI, GFIG…YVLS, and IALS…ASGF.

This sequence belongs to the CDS family. As to quaternary structure, homodimer. Interacts with FOS; this interaction may enhance catalytic activity. Mg(2+) serves as cofactor. Expressed in adult tissues such as placenta, brain, small intestine, ovary, testis and prostate. Highly expressed in fetal kidney, lung and brain. Lower level in fetal liver.

Its subcellular location is the endoplasmic reticulum membrane. The catalysed reaction is a 1,2-diacyl-sn-glycero-3-phosphate + CTP + H(+) = a CDP-1,2-diacyl-sn-glycerol + diphosphate. It catalyses the reaction 1-octadecanoyl-2-(5Z,8Z,11Z,14Z-eicosatetraenoyl)-sn-glycero-3-phosphate + CTP + H(+) = 1-octadecanoyl-2-(5Z,8Z,11Z,14Z-eicosatetraenoyl)-sn-glycero-3-cytidine-5'-diphosphate + diphosphate. It carries out the reaction 1-octadecanoyl-2-(9Z,12Z-octadecadienoyl)-sn-glycero-3-phosphate + CTP + H(+) = 1-octadecanoyl-2-(9Z,12Z-octadecadienoyl)-sn-glycero-3-cytidine-5'-diphosphate + diphosphate. The enzyme catalyses 1-hexadecanoyl-2-(5Z,8Z,11Z,14Z-eicosatetraenoyl)-sn-glycero-3-phosphate + CTP + H(+) = 1-hexadecanoyl-2-(5Z,8Z,11Z,14Z-eicosatetraenoyl)-sn-glycero-3-cytidine-5'-diphosphate + diphosphate. The catalysed reaction is 1,2-di-(5Z,8Z,11Z,14Z)-eicosatetraenoyl-sn-glycero-3-phosphate + CTP + H(+) = 1,2-di-(5Z,8Z,11Z,14Z-eicosatetraenoyl)-sn-glycero-3-cytidine-5'-diphosphate + diphosphate. It catalyses the reaction 1-octadecanoyl-2-(9Z-octadecenoyl)-sn-glycero-3-phosphate + CTP + H(+) = 1-octadecanoyl-2-(9Z-octadecenoyl)-sn-glycero-3-cytidine-5'-diphosphate + diphosphate. It carries out the reaction 1-octadecanoyl-2-(4Z,7Z,10Z,13Z,16Z,19Z-docosahexaenoyl)-sn-glycero-3-phosphate + CTP + H(+) = 1-octadecanoyl-2-(4Z,7Z,10Z,13Z,16Z,19Z-docosahexaenoyl)-sn-glycero-3-cytidine-5'-diphosphate + diphosphate. The enzyme catalyses 1,2-di-(9Z,12Z-octadecadienoyl)-sn-glycero-3-phosphate + CTP + H(+) = 1,2-di-(9Z,12Z-octadecadienoyl)-sn-glycero-3-cytidine-5'-diphosphate + diphosphate. The catalysed reaction is 1,2-di-(9Z-octadecenoyl)-sn-glycero-3-phosphate + CTP + H(+) = 1,2-di-(9Z-octadecenoyl)-sn-glycero-3-cytidine-5'-diphosphate + diphosphate. It participates in phospholipid metabolism; CDP-diacylglycerol biosynthesis; CDP-diacylglycerol from sn-glycerol 3-phosphate: step 3/3. Its activity is regulated as follows. Inhibited by its anionic phospholipid end products, with phosphatidylinositol-(4,5)- bisphosphate showing the strongest inhibition. In terms of biological role, catalyzes the conversion of phosphatidic acid (PA) to CDP-diacylglycerol (CDP-DAG), an essential intermediate in the synthesis of phosphatidylglycerol, cardiolipin and phosphatidylinositol. Exhibits almost no acyl chain preference for PA, showing no discrimination for the sn-1/sn-2 acyl chain composition of PAs. Plays an important role in regulating the growth of lipid droplets which are storage organelles at the center of lipid and energy homeostasis. Positively regulates the differentiation and development of adipocytes. The protein is Phosphatidate cytidylyltransferase 1 of Homo sapiens (Human).